The chain runs to 316 residues: Ribosomal RNA small subunit methyltransferase H (316 aa).

S-adenosyl-L-methionine contacts are provided by residues 42–44 (GGH), aspartate 62, phenylalanine 86, aspartate 104, and glutamine 111.

It belongs to the methyltransferase superfamily. RsmH family.

It is found in the cytoplasm. It carries out the reaction cytidine(1402) in 16S rRNA + S-adenosyl-L-methionine = N(4)-methylcytidine(1402) in 16S rRNA + S-adenosyl-L-homocysteine + H(+). Specifically methylates the N4 position of cytidine in position 1402 (C1402) of 16S rRNA. In Polynucleobacter necessarius subsp. necessarius (strain STIR1), this protein is Ribosomal RNA small subunit methyltransferase H.